Reading from the N-terminus, the 548-residue chain is Protoporphyrinogen oxidase, chloroplastic (548 aa).

Residues 1–50 (MTTTPIANHPNIFTHQSSSSPLAFLNRTSFIPFSSISKRNSVNCNGWRTR) constitute a chloroplast transit peptide. FAD-binding positions include 78-83 (GAGISG), 101-102 (EA), and 123-126 (GPNS). Residues 265–279 (KERSSTPKAPRDPRL) are compositionally biased toward basic and acidic residues. The segment at 265 to 287 (KERSSTPKAPRDPRLPKPKGQTV) is disordered. Residue 522-524 (VAL) coordinates FAD.

Belongs to the protoporphyrinogen/coproporphyrinogen oxidase family. Protoporphyrinogen oxidase subfamily. As to quaternary structure, homodimer. FAD is required as a cofactor.

It localises to the plastid. It is found in the chloroplast. It carries out the reaction protoporphyrinogen IX + 3 O2 = protoporphyrin IX + 3 H2O2. It functions in the pathway porphyrin-containing compound metabolism; protoporphyrin-IX biosynthesis; protoporphyrin-IX from protoporphyrinogen-IX: step 1/1. The protein operates within porphyrin-containing compound metabolism; chlorophyll biosynthesis. Catalyzes the 6-electron oxidation of protoporphyrinogen-IX to form protoporphyrin-IX. The sequence is that of Protoporphyrinogen oxidase, chloroplastic (PPXI) from Nicotiana tabacum (Common tobacco).